The chain runs to 171 residues: Auxin-responsive protein IAA33 (171 aa).

2 stretches are compositionally biased toward polar residues: residues 1–11 (MNSFEPQSQDS) and 19–32 (DNST…TTTP). Positions 1 to 51 (MNSFEPQSQDSLQRRFHQDNSTTQQPRDTTTPFIPKPASKNHNNSNSSSGA) are disordered. The span at 40–49 (KNHNNSNSSS) shows a compositional bias: low complexity. In terms of domain architecture, PB1 spans 72–162 (VPPVTVVLEG…KRIRILPVKG (91 aa)).

It belongs to the Aux/IAA family. In terms of assembly, homodimers and heterodimers.

The protein resides in the nucleus. In terms of biological role, aux/IAA proteins are short-lived transcriptional factors that function as repressors of early auxin response genes at low auxin concentrations. Repression is thought to result from the interaction with auxin response factors (ARFs), proteins that bind to the auxin-responsive promoter element (AuxRE). Formation of heterodimers with ARF proteins may alter their ability to modulate early auxin response genes expression. The chain is Auxin-responsive protein IAA33 (IAA33) from Arabidopsis thaliana (Mouse-ear cress).